We begin with the raw amino-acid sequence, 723 residues long: Polyribonucleotide nucleotidyltransferase (723 aa).

Residues D488 and D494 each coordinate Mg(2+). The KH domain maps to 555 to 614; it reads PRMITMKIHPDKIREVIGKGGSTIQALTKETGTTIDIQEDGTITIASTSTEGMAEAKRRI. The S1 motif domain maps to 624 to 692; that stretch reads GKIYAGTVLK…EKGRLRLSLK (69 aa). The interval 701-723 is disordered; sequence SISPINAGESAAPAAPAGGSEQQ. A compositionally biased stretch (low complexity) spans 707 to 723; the sequence is AGESAAPAAPAGGSEQQ.

Belongs to the polyribonucleotide nucleotidyltransferase family. Requires Mg(2+) as cofactor.

The protein resides in the cytoplasm. The enzyme catalyses RNA(n+1) + phosphate = RNA(n) + a ribonucleoside 5'-diphosphate. Its function is as follows. Involved in mRNA degradation. Catalyzes the phosphorolysis of single-stranded polyribonucleotides processively in the 3'- to 5'-direction. In Cupriavidus taiwanensis (strain DSM 17343 / BCRC 17206 / CCUG 44338 / CIP 107171 / LMG 19424 / R1) (Ralstonia taiwanensis (strain LMG 19424)), this protein is Polyribonucleotide nucleotidyltransferase.